A 501-amino-acid chain; its full sequence is Cytochrome P450 2J1 (501 aa).

A heme-binding site is contributed by cysteine 447.

Belongs to the cytochrome P450 family. Heme is required as a cofactor. Small intestine.

The protein localises to the endoplasmic reticulum membrane. It is found in the microsome membrane. The enzyme catalyses an organic molecule + reduced [NADPH--hemoprotein reductase] + O2 = an alcohol + oxidized [NADPH--hemoprotein reductase] + H2O + H(+). Catalyzes the N-demethylation of benzphetamine to formaldehyde. This Oryctolagus cuniculus (Rabbit) protein is Cytochrome P450 2J1 (CYP2J1).